Here is a 705-residue protein sequence, read N- to C-terminus: Translation initiation factor IF-2 (705 aa).

The segment at 40-124 is disordered; the sequence is DDQIKALDKK…QPAAPKEIPS (85 aa). A compositionally biased stretch (basic and acidic residues) spans 41-58; sequence DQIKALDKKFKKEQKNDN. A compositionally biased stretch (low complexity) spans 59 to 77; that stretch reads KQSTQNNHQKSNNQNQNKG. A compositionally biased stretch (basic residues) spans 94 to 108; the sequence is KGNKKNNRNNKKNNK. A tr-type G domain is found at 207–376; the sequence is ERPAVVTIMG…GLVAEVQELK (170 aa). A G1 region spans residues 216–223; that stretch reads GHVDHGKT. 216–223 contacts GTP; the sequence is GHVDHGKT. The tract at residues 241–245 is G2; sequence GITQH. Residues 262-265 form a G3 region; sequence DTPG. Residues 262-266 and 316-319 contribute to the GTP site; these read DTPGH and NKID. The G4 stretch occupies residues 316 to 319; that stretch reads NKID. The interval 352–354 is G5; that stretch reads SAL.

This sequence belongs to the TRAFAC class translation factor GTPase superfamily. Classic translation factor GTPase family. IF-2 subfamily.

The protein resides in the cytoplasm. Functionally, one of the essential components for the initiation of protein synthesis. Protects formylmethionyl-tRNA from spontaneous hydrolysis and promotes its binding to the 30S ribosomal subunits. Also involved in the hydrolysis of GTP during the formation of the 70S ribosomal complex. In Staphylococcus aureus (strain Mu3 / ATCC 700698), this protein is Translation initiation factor IF-2.